The sequence spans 336 residues: Nuclear envelope-associated protein 1 (336 aa).

Positions 125 to 261 form a coiled coil; that stretch reads CSMLKQQLDD…RRTDQDLKKK (137 aa). Residues 240–261 carry the Bipartite nuclear localization signal motif; that stretch reads KTKELESQLEKQRRTDQDLKKK. The helical transmembrane segment at 313-330 threads the bilayer; the sequence is FWDNSGFKIVVSMSMLML.

In terms of assembly, forms heteromers with NEAP2 and NEAP3. Interacts with SUN1; SUN2 and bZIP18.

The protein localises to the nucleus inner membrane. Its subcellular location is the nucleus. It is found in the nucleoplasm. The sequence is that of Nuclear envelope-associated protein 1 from Arabidopsis thaliana (Mouse-ear cress).